The sequence spans 631 residues: tRNA uridine 5-carboxymethylaminomethyl modification enzyme MnmG (631 aa).

Residues 13-18 (GGGHAG), valine 125, and serine 180 each bind FAD. 273–287 (GPRYCPSIEDKVNRY) serves as a coordination point for NAD(+). FAD is bound at residue glutamine 370.

The protein belongs to the MnmG family. As to quaternary structure, homodimer. Heterotetramer of two MnmE and two MnmG subunits. The cofactor is FAD.

It localises to the cytoplasm. Its function is as follows. NAD-binding protein involved in the addition of a carboxymethylaminomethyl (cmnm) group at the wobble position (U34) of certain tRNAs, forming tRNA-cmnm(5)s(2)U34. The chain is tRNA uridine 5-carboxymethylaminomethyl modification enzyme MnmG from Alcanivorax borkumensis (strain ATCC 700651 / DSM 11573 / NCIMB 13689 / SK2).